A 253-amino-acid polypeptide reads, in one-letter code: Imidazole glycerol phosphate synthase subunit HisF (253 aa).

Catalysis depends on residues Asp11 and Asp130.

This sequence belongs to the HisA/HisF family. In terms of assembly, heterodimer of HisH and HisF.

The protein resides in the cytoplasm. The catalysed reaction is 5-[(5-phospho-1-deoxy-D-ribulos-1-ylimino)methylamino]-1-(5-phospho-beta-D-ribosyl)imidazole-4-carboxamide + L-glutamine = D-erythro-1-(imidazol-4-yl)glycerol 3-phosphate + 5-amino-1-(5-phospho-beta-D-ribosyl)imidazole-4-carboxamide + L-glutamate + H(+). Its pathway is amino-acid biosynthesis; L-histidine biosynthesis; L-histidine from 5-phospho-alpha-D-ribose 1-diphosphate: step 5/9. Functionally, IGPS catalyzes the conversion of PRFAR and glutamine to IGP, AICAR and glutamate. The HisF subunit catalyzes the cyclization activity that produces IGP and AICAR from PRFAR using the ammonia provided by the HisH subunit. The sequence is that of Imidazole glycerol phosphate synthase subunit HisF from Geobacter metallireducens (strain ATCC 53774 / DSM 7210 / GS-15).